The sequence spans 719 residues: Protein ENHANCED DISEASE RESISTANCE 2-like (719 aa).

Residues 3-110 enclose the PH domain; sequence KVVYEGWMVR…WKEKIECVID (108 aa). Residues 134 to 173 form a disordered region; it reads AGRTASSSDHESPFSALEDENDSQRDLLRRTTIGNGPPES. The 213-residue stretch at 180 to 392 folds into the START domain; the sequence is EFDAELSNQS…VSGLREWFSQ (213 aa). Residues 414–478 form a disordered region; that stretch reads ALGKGGKHHH…ETDAKKTEEP (65 aa). A compositionally biased stretch (polar residues) spans 426-439; sequence SLSIDQTNGASRNS. The segment covering 442–461 has biased composition (acidic residues); sequence MDEDSDDDDEFQIPDSEPEP. Over residues 462 to 477 the composition is skewed to basic and acidic residues; it reads ETSKQDQETDAKKTEE. Residues 665-685 form a helical membrane-spanning segment; sequence GVLGLVIGVITSLVVEMAFLV.

It is found in the endoplasmic reticulum membrane. Its subcellular location is the cell membrane. The protein resides in the endosome membrane. Binds to phosphatidylinositol-4-phosphate (PtdIns(4)P). May regulate the salicylic acid- (SA-) mediated resistance to pathogens. This chain is Protein ENHANCED DISEASE RESISTANCE 2-like (EDR2L), found in Arabidopsis thaliana (Mouse-ear cress).